The sequence spans 894 residues: Protein translocase subunit SecA (894 aa).

ATP is bound by residues glutamine 87, glycine 105–threonine 109, and aspartate 512. The tract at residues phenylalanine 857–lysine 894 is disordered. 4 residues coordinate Zn(2+): cysteine 880, cysteine 882, cysteine 891, and cysteine 892.

Belongs to the SecA family. As to quaternary structure, monomer and homodimer. Part of the essential Sec protein translocation apparatus which comprises SecA, SecYEG and auxiliary proteins SecDF-YajC and YidC. It depends on Zn(2+) as a cofactor.

It is found in the cell inner membrane. Its subcellular location is the cytoplasm. It carries out the reaction ATP + H2O + cellular proteinSide 1 = ADP + phosphate + cellular proteinSide 2.. Functionally, part of the Sec protein translocase complex. Interacts with the SecYEG preprotein conducting channel. Has a central role in coupling the hydrolysis of ATP to the transfer of proteins into and across the cell membrane, serving as an ATP-driven molecular motor driving the stepwise translocation of polypeptide chains across the membrane. The polypeptide is Protein translocase subunit SecA (Geotalea uraniireducens (strain Rf4) (Geobacter uraniireducens)).